Reading from the N-terminus, the 853-residue chain is Putative dipeptidyl aminopeptidase C14C4.15c (853 aa).

A disordered region spans residues Met1–Ala26. The Cytoplasmic segment spans residues Met1–Arg65. Residues Ser15 to Ser25 show a composition bias toward basic residues. A helical; Signal-anchor for type II membrane protein membrane pass occupies residues Tyr66–Phe86. Residues Arg87–Cys853 lie on the Lumenal side of the membrane. N-linked (GlcNAc...) asparagine glycosylation is found at Asn96, Asn102, Asn472, Asn483, and Asn613. Active-site charge relay system residues include Ser719, Asp795, and His828.

This sequence belongs to the peptidase S9B family.

The protein localises to the vacuole membrane. The protein is Putative dipeptidyl aminopeptidase C14C4.15c of Schizosaccharomyces pombe (strain 972 / ATCC 24843) (Fission yeast).